The primary structure comprises 68 residues: Large ribosomal subunit protein uL29 (68 aa).

This sequence belongs to the universal ribosomal protein uL29 family.

In Streptococcus agalactiae serotype Ia (strain ATCC 27591 / A909 / CDC SS700), this protein is Large ribosomal subunit protein uL29.